The chain runs to 2623 residues: Probable polyketide synthase 31 (2623 aa).

A compositionally biased stretch (low complexity) spans 1 to 11 (MTQNIDNNNNK). The segment at 1–25 (MTQNIDNNNNKLIRDRNDDDDVDRN) is disordered. One can recognise a Ketosynthase family 3 (KS3) domain in the interval 27–461 (DGDVAVIGIG…GSNVCLILSE (435 aa)). Residues cysteine 199, histidine 338, and histidine 384 each act as for beta-ketoacyl synthase activity in the active site. Residues 666–699 (GVSADIIIGHSLGEVSSPYCSGMIDFQTLCYLIY) are acyl/malonyl transferase. The active-site For acyl/malonyl transferase activity is the serine 676. Residues 959-1088 (HEKIKSEGPS…GNFNLTKHNS (130 aa)) are N-terminal hotdog fold. Positions 959–1267 (HEKIKSEGPS…CALVSLGSNP (309 aa)) constitute a PKS/mFAS DH domain. Histidine 1000 (proton acceptor; for dehydratase activity) is an active-site residue. The tract at residues 1105 to 1267 (NFTSISKQDF…CALVSLGSNP (163 aa)) is C-terminal hotdog fold. Aspartate 1177 (proton donor; for dehydratase activity) is an active-site residue. Residues 2524–2601 (ANNEIIHSTI…QSIEIIKSAK (78 aa)) form the Carrier domain. Serine 2561 carries the post-translational modification O-(pantetheine 4'-phosphoryl)serine. The segment at 2600 to 2623 (AKNNNKNNNNNNNKNNSNNKNKNN) is disordered. Residues 2601–2623 (KNNNKNNNNNNNKNNSNNKNKNN) are compositionally biased toward low complexity.

It depends on pantetheine 4'-phosphate as a cofactor.

In terms of biological role, probable polyketide synthase. This is Probable polyketide synthase 31 (pks31) from Dictyostelium discoideum (Social amoeba).